Reading from the N-terminus, the 362-residue chain is Phosphate acyltransferase (362 aa).

Positions Thr-343 to Ser-362 are disordered. Residues Lys-344–Ser-356 show a composition bias toward polar residues.

It belongs to the PlsX family. In terms of assembly, homodimer. Probably interacts with PlsY.

The protein resides in the cytoplasm. The catalysed reaction is a fatty acyl-[ACP] + phosphate = an acyl phosphate + holo-[ACP]. It participates in lipid metabolism; phospholipid metabolism. Its function is as follows. Catalyzes the reversible formation of acyl-phosphate (acyl-PO(4)) from acyl-[acyl-carrier-protein] (acyl-ACP). This enzyme utilizes acyl-ACP as fatty acyl donor, but not acyl-CoA. The chain is Phosphate acyltransferase from Aster yellows witches'-broom phytoplasma (strain AYWB).